The following is a 275-amino-acid chain: Autophagy protein 5 (275 aa).

Residue Met-1 is modified to N-acetylmethionine. A Glycyl lysine isopeptide (Lys-Gly) (interchain with G-Cter in ATG12) cross-link involves residue Lys-130.

Belongs to the ATG5 family. In terms of assembly, forms a conjugate with ATG12. Part of the minor complex composed of 4 sets of ATG12-ATG5 and ATG16L1 (400 kDa); this complex interacts with ATG3 leading to disruption of ATG7 interaction and promotion of ATG8-like proteins lipidation. Forms an 800-kDa complex composed of ATG12-ATG5 and ATG16L2. The ATG12-ATG5 conjugate interacts with RAB33A; this interaction is bridged by ATG16L1 and promotes ATG12-ATG5-ATG16L1 complex recruitment to phagophores. Interacts with TECPR1; the interaction is direct and does not take place when ATG16L1 is associated with the ATG5-ATG12 conjugate. Interacts with DHX58/RIG-1, IFIH1/MDA5 and MAVS/IPS-1 in monomeric form as well as in ATG12-ATG5 conjugate form. The interaction with MAVS is further enhanced upon vesicular stomatitis virus (VSV) infection. Interacts with ATG3. Interacts with ATG7 and ATG10. Interacts with FADD. Interacts with Bassoon/BSN; this interaction is important for the regulation of presynaptic autophagy. Interacts with ATG16L2. Post-translationally, conjugated to ATG12; which is essential for autophagy, but is not required for association with isolation membrane. Acetylated by EP300.

The protein localises to the cytoplasm. The protein resides in the preautophagosomal structure membrane. Its function is as follows. Involved in autophagic vesicle formation. Conjugation with ATG12, through a ubiquitin-like conjugating system involving ATG7 as an E1-like activating enzyme and ATG10 as an E2-like conjugating enzyme, is essential for its function. The ATG12-ATG5 conjugate acts as an E3-like enzyme which is required for lipidation of ATG8 family proteins and their association to the vesicle membranes. Involved in mitochondrial quality control after oxidative damage, and in subsequent cellular longevity. Plays a critical role in multiple aspects of lymphocyte development and is essential for both B and T lymphocyte survival and proliferation. Required for optimal processing and presentation of antigens for MHC II. Involved in the maintenance of axon morphology and membrane structures, as well as in normal adipocyte differentiation. Promotes primary ciliogenesis through removal of OFD1 from centriolar satellites and degradation of IFT20 via the autophagic pathway. As part of the ATG8 conjugation system with ATG12 and ATG16L1, required for recruitment of LRRK2 to stressed lysosomes and induction of LRRK2 kinase activity in response to lysosomal stress. In terms of biological role, may play an important role in the apoptotic process, possibly within the modified cytoskeleton. Its expression is a relatively late event in the apoptotic process, occurring downstream of caspase activity. Plays a crucial role in IFN-gamma-induced autophagic cell death by interacting with FADD. In Pongo abelii (Sumatran orangutan), this protein is Autophagy protein 5.